The sequence spans 374 residues: MSNSDKFFNDFKDIVENPKKYIMKHMEQTGQKAIGCMPLYTPEELVLAAGMFPVGVWGSNTELSKAKTYFPAFICSILQTTLENALNGEYDMLSGMMITNYCDSLKCMGQNFKLTVENIEFIPVTVPQNRKMEAGKEFLKSQYKMNIEQLEKISGNKITDESLEKAIEIYDEHRKVMNDFSMLASKYPGIITPTKRNYVMKSAYYMDKKEHTEKVRQLMDEIKAIEPKPFEGKRVITTGIIADSEDLLKILEENNIAIVGDDIAHESRQYRTLTPEANTPMDRLAEQFANRECSTLYDPEKKRGQYIVEMAKERKADGIIFFMTKFCDPEEYDYPQMKKDFEEAGIPHVLIETDMQMKNYEQARTAIQAFSETL.

This sequence belongs to the FldB/FldC dehydratase alpha/beta subunit family. In terms of assembly, part of the heterotrimeric phenyllactate dehydratase complex FldABC, composed of (R)-phenyllactate CoA-transferase (FldA) and a heterodimeric (R)-phenyllactyl-CoA dehydratase (FldB and FldC). It depends on [4Fe-4S] cluster as a cofactor. No flavin could be detected in the FldABC complex, and the addition of FAD, FMN or riboflavin to the dehydratase do not increase enzymatic activity. serves as cofactor.

It carries out the reaction (R)-3-phenyllactoyl-CoA = (E)-cinnamoyl-CoA + H2O. The catalysed reaction is (R)-3-(4-hydroxyphenyl)lactoyl-CoA = (E)-4-coumaroyl-CoA + H2O. It catalyses the reaction (R)-3-(indol-3-yl)lactoyl-CoA = (E)-3-(indol-3-yl)acryloyl-CoA + H2O. It participates in amino-acid degradation; L-phenylalanine degradation. In terms of biological role, component of the phenyllactate dehydratase complex FldABC that is involved in the fermentation of L-phenylalanine via a Stickland reaction. This complex catalyzes the reversible syn-dehydration of (R)-phenyllactate to (E)-cinnamate in two steps, a CoA-transfer from cinnamoyl-CoA to phenyllactate, catalyzed by FldA, followed by the dehydration of phenyllactyl-CoA to cinnamoyl-CoA, catalyzed by FldB and FldC. Requires the activator FldI to initiate catalysis. The chain is (R)-phenyllactyl-CoA dehydratase beta subunit from Clostridium sporogenes.